Consider the following 119-residue polypeptide: Large ribosomal subunit protein bL19 (119 aa).

The protein belongs to the bacterial ribosomal protein bL19 family.

Its function is as follows. This protein is located at the 30S-50S ribosomal subunit interface and may play a role in the structure and function of the aminoacyl-tRNA binding site. This chain is Large ribosomal subunit protein bL19, found in Psychromonas ingrahamii (strain DSM 17664 / CCUG 51855 / 37).